A 383-amino-acid chain; its full sequence is MHASTLTRCMRVAQNARCLSTAAASVQVTHSERGARLAALRERLAEETRQGPTFAEQALSLEDFAFEADAAPGTKPSRKPNASNRKPKWLKAQPTQGANYERLRKSVKSLGLSTVCEEAKCPNIGECWGGGKDGIATATIMLMGDTCTRGCSFCAVKTSRKPKPLDIEEPNKVAEAIAAWGLDYIVFTSVDRDDYEDLGAGHFAKTVSTLRAKLPEILIECLTPDFQGHDNLIDQVATSGLDVFAHNMETVERLQRRVRDYRANYKQSLHVLERAKVAAPHLVTKTSLMLGVGERNEDLFQTLRDLRNSGVDVVTFGQYLRPSTKHMPVKSYVTPEAFAEWQKVAEQMGFLYVASGPMVRSSYKAGEFFMKNLLKNRKTQVVA.

The N-terminal 19 residues, 1–19, are a transit peptide targeting the mitochondrion; sequence MHASTLTRCMRVAQNARCL. Residues 69–97 form a disordered region; it reads DAAPGTKPSRKPNASNRKPKWLKAQPTQG. Residues C116, C121, C127, C147, C151, C154, and S362 each coordinate [4Fe-4S] cluster. The Radical SAM core domain maps to 132-351; it reads KDGIATATIM…QKVAEQMGFL (220 aa).

Belongs to the radical SAM superfamily. Lipoyl synthase family. [4Fe-4S] cluster is required as a cofactor.

The protein localises to the mitochondrion. The enzyme catalyses [[Fe-S] cluster scaffold protein carrying a second [4Fe-4S](2+) cluster] + N(6)-octanoyl-L-lysyl-[protein] + 2 oxidized [2Fe-2S]-[ferredoxin] + 2 S-adenosyl-L-methionine + 4 H(+) = [[Fe-S] cluster scaffold protein] + N(6)-[(R)-dihydrolipoyl]-L-lysyl-[protein] + 4 Fe(3+) + 2 hydrogen sulfide + 2 5'-deoxyadenosine + 2 L-methionine + 2 reduced [2Fe-2S]-[ferredoxin]. Its pathway is protein modification; protein lipoylation via endogenous pathway; protein N(6)-(lipoyl)lysine from octanoyl-[acyl-carrier-protein]: step 2/2. Functionally, catalyzes the radical-mediated insertion of two sulfur atoms into the C-6 and C-8 positions of the octanoyl moiety bound to the lipoyl domains of lipoate-dependent enzymes, thereby converting the octanoylated domains into lipoylated derivatives. This chain is Lipoyl synthase, mitochondrial, found in Phytophthora infestans (strain T30-4) (Potato late blight agent).